A 359-amino-acid polypeptide reads, in one-letter code: Alanine racemase (359 aa).

Lysine 34 functions as the Proton acceptor; specific for D-alanine in the catalytic mechanism. Lysine 34 carries the N6-(pyridoxal phosphate)lysine modification. Position 129 (arginine 129) interacts with substrate. Tyrosine 254 functions as the Proton acceptor; specific for L-alanine in the catalytic mechanism. Methionine 302 provides a ligand contact to substrate.

The protein belongs to the alanine racemase family. Pyridoxal 5'-phosphate is required as a cofactor.

The catalysed reaction is L-alanine = D-alanine. Its pathway is amino-acid biosynthesis; D-alanine biosynthesis; D-alanine from L-alanine: step 1/1. Functionally, catalyzes the interconversion of L-alanine and D-alanine. May also act on other amino acids. The sequence is that of Alanine racemase (alr) from Yersinia pestis.